The sequence spans 737 residues: Transcription activator MSS11 (737 aa).

The segment at 1–23 (MDNTTNINTNERSSNTDFSSAPN) is disordered. Positions 51–83 (SKQLLYAHIYNYLIKNNYWNSAAKFLSEADLPL) constitute a LisH domain. Disordered stretches follow at residues 191–220 (TQNS…TNRN), 268–347 (LQSP…PTNQ), 413–439 (GNQN…NANG), and 572–660 (KTNT…TKES). Positions 207–220 (DGSNFNLNDPTNRN) are enriched in polar residues. Positions 269–314 (QSPAQPQQSSQQQIQQPQRQPQHQQQQQQQQQQQQQQQQQQQQQQQ) are enriched in low complexity. Composition is skewed to polar residues over residues 330–347 (SENS…PTNQ), 421–439 (TRNN…NANG), and 572–585 (KTNT…STSV). The segment covering 590–643 (NNNNNNNNNNNNNNNSNNSNNNNNNNNSNNTPTVSQPSSKRTSSSSTTPNITTT) has biased composition (low complexity). Residues 646–655 (PKRKQRVGKT) are compositionally biased toward basic residues.

It belongs to the MSS11 family. Interacts with FLO8, STE12 and TEC1.

It localises to the cytoplasm. It is found in the nucleus. Its function is as follows. Transcription factor that regulates pseudohyphal differentiation, invasive growth, floculation, adhesion and starch metabolism in response to nutrient availability. The polypeptide is Transcription activator MSS11 (MSS11) (Saccharomyces cerevisiae (strain YJM789) (Baker's yeast)).